Consider the following 281-residue polypeptide: Release factor glutamine methyltransferase (281 aa).

Residues Glu-141 and Asn-185 each coordinate S-adenosyl-L-methionine. 185–188 (NPPY) lines the substrate pocket.

Belongs to the protein N5-glutamine methyltransferase family. PrmC subfamily.

It catalyses the reaction L-glutaminyl-[peptide chain release factor] + S-adenosyl-L-methionine = N(5)-methyl-L-glutaminyl-[peptide chain release factor] + S-adenosyl-L-homocysteine + H(+). Its function is as follows. Methylates the class 1 translation termination release factors RF1/PrfA and RF2/PrfB on the glutamine residue of the universally conserved GGQ motif. The polypeptide is Release factor glutamine methyltransferase (Mycolicibacterium smegmatis (strain ATCC 700084 / mc(2)155) (Mycobacterium smegmatis)).